We begin with the raw amino-acid sequence, 326 residues long: Probable GTP 3',8-cyclase (326 aa).

The 230-residue stretch at 6–235 folds into the Radical SAM core domain; it reads LYGRPVLSLR…NRPRYIIRTQ (230 aa). Arg-15 serves as a coordination point for GTP. Positions 22, 26, and 29 each coordinate [4Fe-4S] cluster. Lys-62 serves as a coordination point for GTP. Gly-66 serves as a coordination point for S-adenosyl-L-methionine. Thr-92 serves as a coordination point for GTP. Ser-116 lines the S-adenosyl-L-methionine pocket. Lys-153 is a GTP binding site. [4Fe-4S] cluster-binding residues include Cys-253 and Cys-256. 258 to 260 lines the GTP pocket; the sequence is RLR. [4Fe-4S] cluster is bound at residue Cys-270.

This sequence belongs to the radical SAM superfamily. MoaA family. Requires [4Fe-4S] cluster as cofactor.

It carries out the reaction GTP + AH2 + S-adenosyl-L-methionine = (8S)-3',8-cyclo-7,8-dihydroguanosine 5'-triphosphate + 5'-deoxyadenosine + L-methionine + A + H(+). It functions in the pathway cofactor biosynthesis; molybdopterin biosynthesis. Its function is as follows. Catalyzes the cyclization of GTP to (8S)-3',8-cyclo-7,8-dihydroguanosine 5'-triphosphate. The protein is Probable GTP 3',8-cyclase of Thermoplasma volcanium (strain ATCC 51530 / DSM 4299 / JCM 9571 / NBRC 15438 / GSS1).